Consider the following 334-residue polypeptide: uncharacterized protein (334 aa).

This sequence belongs to the MG414/MG415 family.

This is an uncharacterized protein from Mycoplasma pneumoniae (strain ATCC 29342 / M129 / Subtype 1) (Mycoplasmoides pneumoniae).